We begin with the raw amino-acid sequence, 184 residues long: ADP-ribosylation factor-like protein 2 (184 aa).

Gly2 carries N-myristoyl glycine lipidation. Residues 23–30, 66–70, and 125–128 contribute to the GTP site; these read GLDNAGKT, DVGGQ, and NKQD.

Belongs to the small GTPase superfamily. Arf family. In terms of tissue distribution, ubiquitously expressed.

Its function is as follows. GTP-binding protein involved in protein trafficking; may modulate vesicle budding and uncoating within the Golgi apparatus. This is ADP-ribosylation factor-like protein 2 (Arl2) from Drosophila melanogaster (Fruit fly).